The following is a 208-amino-acid chain: Uracil phosphoribosyltransferase (208 aa).

5-phospho-alpha-D-ribose 1-diphosphate-binding positions include Arg78, Arg103, and 130-138 (DPMLATGGT). Uracil-binding positions include Ile193 and 198-200 (GDA). Asp199 serves as a coordination point for 5-phospho-alpha-D-ribose 1-diphosphate.

This sequence belongs to the UPRTase family. Mg(2+) serves as cofactor.

The enzyme catalyses UMP + diphosphate = 5-phospho-alpha-D-ribose 1-diphosphate + uracil. It participates in pyrimidine metabolism; UMP biosynthesis via salvage pathway; UMP from uracil: step 1/1. With respect to regulation, allosterically activated by GTP. Functionally, catalyzes the conversion of uracil and 5-phospho-alpha-D-ribose 1-diphosphate (PRPP) to UMP and diphosphate. The protein is Uracil phosphoribosyltransferase of Maridesulfovibrio salexigens (strain ATCC 14822 / DSM 2638 / NCIMB 8403 / VKM B-1763) (Desulfovibrio salexigens).